The chain runs to 307 residues: Alginate lyase (307 aa).

The signal sequence occupies residues 1–20; the sequence is MLKSGVMVASLCLFSVPSRA.

This sequence belongs to the polysaccharide lyase 7 family.

Its subcellular location is the secreted. It carries out the reaction Eliminative cleavage of alginate to give oligosaccharides with 4-deoxy-alpha-L-erythro-hex-4-enuronosyl groups at their non-reducing ends and beta-D-mannuronate at their reducing end.. Its function is as follows. Degrades alginates that contain guluronic acid. The sequence is that of Alginate lyase (alyA) from Klebsiella pneumoniae.